The following is a 295-amino-acid chain: MAVDAKLIKELREITQAGMMDCKKALEASDNNIDNAIVWLRENGLAKAAKKTDRVAAEGIVLAKENDQKIVILEVNSETDFVAKNEKFLSLVDEIANALLNSNASSLEEGLQVKTDSGLTIEQSLISATATIGEKIALRRFELVNKTSGSSVIYNHANKRVSTLLVFDNKLDPTDAYNVAMHVAAMAPKYINMDQIPEDFKNAEMHIIKEQAKDDAKLQAKPANVLENILKGKLSKRLAEVSLLDQLFVIDESFKVGDFLKSKHVSLVKMIRYEVGEGIEKVVTNFADEVAAQLK.

The tract at residues 79–82 (TDFV) is involved in Mg(2+) ion dislocation from EF-Tu.

Belongs to the EF-Ts family.

It localises to the cytoplasm. Its function is as follows. Associates with the EF-Tu.GDP complex and induces the exchange of GDP to GTP. It remains bound to the aminoacyl-tRNA.EF-Tu.GTP complex up to the GTP hydrolysis stage on the ribosome. The sequence is that of Elongation factor Ts from Mycoplasma mycoides subsp. mycoides SC (strain CCUG 32753 / NCTC 10114 / PG1).